The primary structure comprises 315 residues: Ribose-phosphate pyrophosphokinase (315 aa).

Residues 40-42 and 99-100 each bind ATP; these read DGE and RQ. Mg(2+) is bound by residues H133 and D175. K198 is an active-site residue. D-ribose 5-phosphate is bound by residues R200, D224, and 228–232; that span reads DTAHS.

Belongs to the ribose-phosphate pyrophosphokinase family. Class I subfamily. As to quaternary structure, homohexamer. The cofactor is Mg(2+).

Its subcellular location is the cytoplasm. The catalysed reaction is D-ribose 5-phosphate + ATP = 5-phospho-alpha-D-ribose 1-diphosphate + AMP + H(+). The protein operates within metabolic intermediate biosynthesis; 5-phospho-alpha-D-ribose 1-diphosphate biosynthesis; 5-phospho-alpha-D-ribose 1-diphosphate from D-ribose 5-phosphate (route I): step 1/1. Functionally, involved in the biosynthesis of the central metabolite phospho-alpha-D-ribosyl-1-pyrophosphate (PRPP) via the transfer of pyrophosphoryl group from ATP to 1-hydroxyl of ribose-5-phosphate (Rib-5-P). The protein is Ribose-phosphate pyrophosphokinase of Thermotoga maritima (strain ATCC 43589 / DSM 3109 / JCM 10099 / NBRC 100826 / MSB8).